Here is a 156-residue protein sequence, read N- to C-terminus: Photosystem I reaction center subunit XI (156 aa).

Helical transmembrane passes span 75–95 (GGLL…SLYA) and 128–148 (FFIG…ALYF).

It belongs to the PsaL family.

Its subcellular location is the cellular thylakoid membrane. This Crocosphaera subtropica (strain ATCC 51142 / BH68) (Cyanothece sp. (strain ATCC 51142)) protein is Photosystem I reaction center subunit XI.